Consider the following 356-residue polypeptide: Glutamine synthetase root isozyme 3 (356 aa).

A GS beta-grasp domain is found at 19 to 99 (IIAEYIWIGG…VMCDCYTPAG (81 aa)). Positions 106–356 (KRYNAAKIFS…IAETTIIWKP (251 aa)) constitute a GS catalytic domain.

The protein belongs to the glutamine synthetase family. Homooctamer. As to expression, found in all the tissues examined with higher expression found in tissues of the root.

Its subcellular location is the cytoplasm. It carries out the reaction L-glutamate + NH4(+) + ATP = L-glutamine + ADP + phosphate + H(+). In terms of biological role, plays a role in the flow of nitrogen into nitrogenous organic compounds. This chain is Glutamine synthetase root isozyme 3 (GLN4), found in Zea mays (Maize).